Consider the following 268-residue polypeptide: Indole-3-glycerol phosphate synthase (268 aa).

This sequence belongs to the TrpC family.

It catalyses the reaction 1-(2-carboxyphenylamino)-1-deoxy-D-ribulose 5-phosphate + H(+) = (1S,2R)-1-C-(indol-3-yl)glycerol 3-phosphate + CO2 + H2O. Its pathway is amino-acid biosynthesis; L-tryptophan biosynthesis; L-tryptophan from chorismate: step 4/5. This chain is Indole-3-glycerol phosphate synthase, found in Magnetococcus marinus (strain ATCC BAA-1437 / JCM 17883 / MC-1).